The sequence spans 483 residues: ATP synthase subunit beta (483 aa).

169–176 (GGAGVGKT) is a binding site for ATP.

It belongs to the ATPase alpha/beta chains family. F-type ATPases have 2 components, CF(1) - the catalytic core - and CF(0) - the membrane proton channel. CF(1) has five subunits: alpha(3), beta(3), gamma(1), delta(1), epsilon(1). CF(0) has three main subunits: a(1), b(2) and c(9-12). The alpha and beta chains form an alternating ring which encloses part of the gamma chain. CF(1) is attached to CF(0) by a central stalk formed by the gamma and epsilon chains, while a peripheral stalk is formed by the delta and b chains.

Its subcellular location is the cell membrane. It carries out the reaction ATP + H2O + 4 H(+)(in) = ADP + phosphate + 5 H(+)(out). Produces ATP from ADP in the presence of a proton gradient across the membrane. The catalytic sites are hosted primarily by the beta subunits. This is ATP synthase subunit beta from Corynebacterium glutamicum (strain R).